Consider the following 425-residue polypeptide: Interferon-activable protein 211 (425 aa).

The Pyrin domain maps to 1 to 88 (MVNEYKRIVL…AEILKKERSE (88 aa)). Positions 86 to 99 (RSEVTGETSLEKNG) are enriched in basic and acidic residues. The tract at residues 86 to 223 (RSEVTGETSL…QNQNIPRGAV (138 aa)) is disordered. Residues 122 to 153 (TSATQEETSTAQAGTSTAQAGTSTAQAGTSTA) are compositionally biased toward low complexity. 4 consecutive repeat copies span residues 129–135 (TSTAQAG), 136–142 (TSTAQAG), 143–149 (TSTAQAG), and 150–156 (TSTAQKR). Residues 129-177 (TSTAQAGTSTAQAGTSTAQAGTSTAQKRKSMREEETGVKKSKAAKEPDQ) are 4 X 7 AA tandem repeats of T-S-T-A-Q-A-[GR]. The span at 159 to 176 (MREEETGVKKSKAAKEPD) shows a compositional bias: basic and acidic residues. Positions 190–206 (SPILHSSSSASSNILSA) are enriched in low complexity. Residues 207 to 218 (KNQKSQPQNQNI) are compositionally biased toward polar residues. One can recognise an HIN-200 domain in the interval 213 to 413 (PQNQNIPRGA…CGDHSFVKVT (201 aa)).

Belongs to the HIN-200 family. As to quaternary structure, interacts with HOXB2. In terms of tissue distribution, mononuclear phagocytes.

The protein resides in the nucleus. Its function is as follows. Inhibits cell growth via p53/TP53 and RB1-dependent and independent pathways. May work in synergy with TP53 to promote the transcription of CDKN1A/P21. This chain is Interferon-activable protein 211, found in Mus musculus (Mouse).